The primary structure comprises 321 residues: Beta-ketoacyl-[acyl-carrier-protein] synthase III (321 aa).

Active-site residues include cysteine 116 and histidine 248. Positions glutamine 249–arginine 253 are ACP-binding. Asparagine 278 is an active-site residue.

It belongs to the thiolase-like superfamily. FabH family. As to quaternary structure, homodimer.

Its subcellular location is the cytoplasm. It carries out the reaction malonyl-[ACP] + acetyl-CoA + H(+) = 3-oxobutanoyl-[ACP] + CO2 + CoA. It participates in lipid metabolism; fatty acid biosynthesis. Functionally, catalyzes the condensation reaction of fatty acid synthesis by the addition to an acyl acceptor of two carbons from malonyl-ACP. Catalyzes the first condensation reaction which initiates fatty acid synthesis and may therefore play a role in governing the total rate of fatty acid production. Possesses both acetoacetyl-ACP synthase and acetyl transacylase activities. Its substrate specificity determines the biosynthesis of branched-chain and/or straight-chain of fatty acids. In Yersinia enterocolitica serotype O:8 / biotype 1B (strain NCTC 13174 / 8081), this protein is Beta-ketoacyl-[acyl-carrier-protein] synthase III.